The sequence spans 287 residues: MEMO1 family protein MJ0403 (287 aa).

Belongs to the MEMO1 family.

The chain is MEMO1 family protein MJ0403 from Methanocaldococcus jannaschii (strain ATCC 43067 / DSM 2661 / JAL-1 / JCM 10045 / NBRC 100440) (Methanococcus jannaschii).